Consider the following 443-residue polypeptide: MSEMTPREIVHELNRHIIGQDNAKRSVAIALRNRWRRMQLEESLRVEVTPKNILMIGPTGVGKTEIARRLAKLANAPFIKVEATKFTEVGYVGKEVESIIRDLTDVAVKLTHQQAMEKVKFRAEELAEERILDALLPPPRDAWGQNEQSEDTSNTRQIFRKKLREGKLDDKEIEINVAAPQMGVEIMAPPGMEEMTNQLQGMFQSLAGNTSKKRKLKIKDAFKALIEEEAAKLVNQDELKEQAIYSVENNGIVFIDEIDKICKRGESSGPDVSREGVQRDLLPLIEGSTVSTKHGMVKTDHILFIASGAFQVAKPSDLIPELQGRLPIRVELEALSSHDFKRILTEPRASLTEQYVALMKTEDVDIEFTEDGITQIAEAAWTVNETTENIGARRLHTVMERLMDEISFDATEKSGTKFVIDAAYVQQRLGEFVEDEDLSRFIL.

ATP is bound by residues isoleucine 18 and 60–65; that span reads GVGKTE. Positions 137–156 are disordered; the sequence is PPPRDAWGQNEQSEDTSNTR. A compositionally biased stretch (polar residues) spans 145–156; the sequence is QNEQSEDTSNTR. The ATP site is built by aspartate 256, glutamate 321, and arginine 393.

This sequence belongs to the ClpX chaperone family. HslU subfamily. A double ring-shaped homohexamer of HslV is capped on each side by a ring-shaped HslU homohexamer. The assembly of the HslU/HslV complex is dependent on binding of ATP.

The protein localises to the cytoplasm. ATPase subunit of a proteasome-like degradation complex; this subunit has chaperone activity. The binding of ATP and its subsequent hydrolysis by HslU are essential for unfolding of protein substrates subsequently hydrolyzed by HslV. HslU recognizes the N-terminal part of its protein substrates and unfolds these before they are guided to HslV for hydrolysis. The sequence is that of ATP-dependent protease ATPase subunit HslU from Vibrio vulnificus (strain YJ016).